Consider the following 454-residue polypeptide: Growth/differentiation factor 6 (454 aa).

Residues 1 to 22 form the signal peptide; that stretch reads MDTPRVLLWAIFLISFLWDLPG. The propeptide occupies 23 to 334; that stretch reads FQQASISSSS…LPSPGRRRRR (312 aa). Residues 28 to 93 form a disordered region; sequence ISSSSSSSTE…QGQEPPGRGL (66 aa). 2 stretches are compositionally biased toward basic and acidic residues: residues 39–52 and 60–73; these read DSTK…EGKM and AEGR…LRQK. Residues 81-92 are compositionally biased toward low complexity; sequence GQHQGQEPPGRG. Asparagine 117 carries an N-linked (GlcNAc...) asparagine glycan. Disordered stretches follow at residues 247 to 268 and 303 to 350; these read DTGA…SLGF and AEAA…KKSR. Residues 303 to 319 are compositionally biased toward low complexity; it reads AEAAGAEGSWPAPSGSP. Over residues 329–350 the composition is skewed to basic residues; it reads GRRRRRTAFASRHGKRHGKKSR. Disulfide bonds link cysteine 353/cysteine 419, cysteine 382/cysteine 451, and cysteine 386/cysteine 453.

Belongs to the TGF-beta family. As to quaternary structure, homodimer; disulfide-linked. In terms of tissue distribution, expressed in different subsets of developing joints. Highly expressed in the cochlea.

It localises to the secreted. Growth factor that controls proliferation and cellular differentiation in the retina and bone formation. Plays a key role in regulating apoptosis during retinal development. Establishes dorsal-ventral positional information in the retina and controls the formation of the retinotectal map. Required for normal formation of bones and joints in the limbs, skull, digits and axial skeleton. Plays a key role in establishing boundaries between skeletal elements during development. Regulation of GDF6 expression seems to be a mechanism for evolving species-specific changes in skeletal structures. Seems to positively regulate differentiation of chondrogenic tissue through the growth factor receptors subunits BMPR1A, BMPR1B, BMPR2 and ACVR2A, leading to the activation of SMAD1-SMAD5-SMAD8 complex. The regulation of chondrogenic differentiation is inhibited by NOG. Also involved in the induction of adipogenesis from mesenchymal stem cells. This mechanism acts through the growth factor receptors subunits BMPR1A, BMPR2 and ACVR2A and the activation of SMAD1-SMAD5-SMAD8 complex and MAPK14/p38. The chain is Growth/differentiation factor 6 (Gdf6) from Mus musculus (Mouse).